The chain runs to 388 residues: bZIP transcription factor 1-D (388 aa).

Disordered stretches follow at residues 1–49 (MGSS…PIPP), 103–249 (FAPY…GPTT), 261–316 (TASS…RKQA), and 348–388 (ELLS…KDTN). 2 stretches are compositionally biased toward low complexity: residues 23–33 (PPATSSTATPT) and 117–129 (AAGT…TAGG). Residues 169–179 (SGASANGTISQ) show a composition bias toward polar residues. Low complexity predominate over residues 180 to 193 (SGESGSESSSEGSE). Polar residues predominate over residues 214–231 (RSSQNGVSPSPSQAQLKQ). The bZIP domain maps to 293–356 (ELKRQKRKQS…DELLSKNSSL (64 aa)). The basic motif stretch occupies residues 295–314 (KRQKRKQSNRDSARRSRLRK). The span at 302–316 (SNRDSARRSRLRKQA) shows a compositional bias: basic and acidic residues. The interval 321–356 (LAQRAEVLKQENASLKDEVSRIRKEYDELLSKNSSL) is leucine-zipper. Basic and acidic residues-rich tracts occupy residues 359 to 369 (NVGDKQHKTDE) and 375 to 388 (KLQH…KDTN).

The protein belongs to the bZIP family. In terms of tissue distribution, highly expressed in roots and at lower levels in stems and leaves.

It is found in the nucleus. Its function is as follows. Probable transcription factor that may be involved in responses to fungal pathogen infection and abiotic stresses. In Triticum aestivum (Wheat), this protein is bZIP transcription factor 1-D.